The chain runs to 650 residues: MAMDGYLWMVILGFIIAFILAFSVGANDVANSFGTAVGSGVVTLRQACILASIFETTGSVLLGAKVGETIRKGIIDVNLYNDTVVTLMAGEVSAMVGSAVWQLIASFLRLPISGTHCIVGSTIGFSLVANGTKGVQWMELVKIVASWFISPLLSGFMSGVLFVLIRMFILTKEDPVPNGLQALPLFYAATIAINVFSIMYTGAPVLGLSLPIWAIALISFGVALLFAFFVWLFVCPWMRRKIAGKLEKESALSRTSDESLSKVQEVESPFKELPGAKASDDSAVPLTNPTGEAVGPSEGTSTGNHPRTAYGRALSMTHGSAKSPISNGTFSFEGHMRNDGHVYHTVHKDSGLYKDLLHKIHVDKGPEEKLSQENNYRLLRRNNSYTCYTAAICGMPVHTTFRATDASSAPEDSEKLVGDTVSYSKKRLRYDSYSSYCNAVAEAEIEAEEGGVEMRLASELADPDQPHDDPTEEEKEEKDTAEVHLLFHFLQVLTACFGSFAHGGNDVSNAIGPLVALWLIYEQGGVMQEAATPVWLLFYGGVGICTGLWVWGRRVIQTMGKDLTPITPSSGFTIELASAFTVVIASNIGLPVSTTHCKVGSVVAVGWIRSRKAVDWHLFRNIFVAWFVTVPVAGLFSAAIMAIFMYGILS.

Over 1–5 (MAMDG) the chain is Extracellular. The helical transmembrane segment at 6 to 26 (YLWMVILGFIIAFILAFSVGA) threads the bilayer. Topologically, residues 27–46 (NDVANSFGTAVGSGVVTLRQ) are cytoplasmic. Residues 47–67 (ACILASIFETTGSVLLGAKVG) traverse the membrane as a helical segment. Topologically, residues 68–83 (ETIRKGIIDVNLYNDT) are extracellular. The N-linked (GlcNAc...) asparagine glycan is linked to asparagine 81. A helical membrane pass occupies residues 84-104 (VVTLMAGEVSAMVGSAVWQLI). Residues 105 to 109 (ASFLR) lie on the Cytoplasmic side of the membrane. Residues 110-130 (LPISGTHCIVGSTIGFSLVAN) form a helical membrane-spanning segment. Residues 131–142 (GTKGVQWMELVK) lie on the Extracellular side of the membrane. A helical transmembrane segment spans residues 143–163 (IVASWFISPLLSGFMSGVLFV). The Cytoplasmic segment spans residues 164–192 (LIRMFILTKEDPVPNGLQALPLFYAATIA). The helical transmembrane segment at 193-212 (INVFSIMYTGAPVLGLSLPI) threads the bilayer. Position 213 (tryptophan 213) is a topological domain, extracellular. A helical membrane pass occupies residues 214–234 (AIALISFGVALLFAFFVWLFV). Residues 235–482 (CPWMRRKIAG…EEKEEKDTAE (248 aa)) lie on the Cytoplasmic side of the membrane. Serine 253, serine 256, serine 259, serine 268, serine 315, and serine 384 each carry phosphoserine. The tract at residues 268–310 (SPFKELPGAKASDDSAVPLTNPTGEAVGPSEGTSTGNHPRTAY) is disordered. A helical transmembrane segment spans residues 483–503 (VHLLFHFLQVLTACFGSFAHG). Over 504 to 530 (GNDVSNAIGPLVALWLIYEQGGVMQEA) the chain is Extracellular. Residues 531-551 (ATPVWLLFYGGVGICTGLWVW) form a helical membrane-spanning segment. The Cytoplasmic segment spans residues 552 to 571 (GRRVIQTMGKDLTPITPSSG). The chain crosses the membrane as a helical span at residues 572–586 (FTIELASAFTVVIAS). The Extracellular segment spans residues 587–593 (NIGLPVS). The chain crosses the membrane as a helical span at residues 594–609 (TTHCKVGSVVAVGWIR). Residues 610–621 (SRKAVDWHLFRN) are Cytoplasmic-facing. The helical transmembrane segment at 622–642 (IFVAWFVTVPVAGLFSAAIMA) threads the bilayer. The Extracellular segment spans residues 643 to 650 (IFMYGILS).

The protein belongs to the inorganic phosphate transporter (PiT) (TC 2.A.20) family. Homodimer.

It is found in the cell membrane. Its subcellular location is the apical cell membrane. It catalyses the reaction 2 Na(+)(out) + phosphate(out) = 2 Na(+)(in) + phosphate(in). Sodium-phosphate symporter which preferentially transports the monovalent form of phosphate with a stoichiometry of two sodium ions per phosphate ion. Plays a critical role in the determination of bone quality and strength by providing phosphate for bone mineralization. Required to maintain normal cerebrospinal fluid phosphate levels. Mediates phosphate-induced calcification of vascular smooth muscle cells (VCMCs) and can functionally compensate for loss of SLC20A1 in VCMCs. In terms of biological role, (Microbial infection) Functions as a retroviral receptor and confers hamster cells susceptibility to infection to Gibbon Ape Leukemia Virus (GaLV) and amphotropic murine leukemia virus (A-MuLV). This chain is Sodium-dependent phosphate transporter 2 (SLC20A2), found in Cricetulus griseus (Chinese hamster).